A 462-amino-acid polypeptide reads, in one-letter code: GTPase Der (462 aa).

EngA-type G domains are found at residues 3–170 (ITIA…TSQK) and 201–372 (IKIA…FNSI). GTP contacts are provided by residues 9 to 16 (GRTNVGKS), 57 to 61 (DTPGI), 122 to 125 (NKIE), 207 to 214 (GKPNVGKS), 254 to 258 (DTAGI), and 319 to 322 (NKND). Residues 373 to 457 (KKIHTSKITE…SIVLYFKSSK (85 aa)) enclose the KH-like domain.

Belongs to the TRAFAC class TrmE-Era-EngA-EngB-Septin-like GTPase superfamily. EngA (Der) GTPase family. Associates with the 50S ribosomal subunit.

In terms of biological role, GTPase that plays an essential role in the late steps of ribosome biogenesis. The protein is GTPase Der of Buchnera aphidicola subsp. Baizongia pistaciae (strain Bp).